Consider the following 336-residue polypeptide: Foldase protein PrsA (336 aa).

Residues 1-22 form the signal peptide; the sequence is MKSAKKLLSVLCLGIFILTFTA. Cys-23 is lipidated: N-palmitoyl cysteine. Cys-23 carries S-diacylglycerol cysteine lipidation. Positions 194–286 constitute a PpiC domain; that stretch reads PNTMNVSHIL…WGYHIIKVNS (93 aa).

This sequence belongs to the PrsA family.

Its subcellular location is the cell membrane. The enzyme catalyses [protein]-peptidylproline (omega=180) = [protein]-peptidylproline (omega=0). In terms of biological role, plays a major role in protein secretion by helping the post-translocational extracellular folding of several secreted proteins. This Clostridium botulinum (strain ATCC 19397 / Type A) protein is Foldase protein PrsA.